Reading from the N-terminus, the 444-residue chain is Protein phosphatase 2C homolog C10F6.17c (444 aa).

Positions 85-439 (RYDFNQVASN…DDITVTVIFF (355 aa)) constitute a PPM-type phosphatase domain. 3 residues coordinate Mn(2+): aspartate 121, glycine 122, and aspartate 344.

It belongs to the PP2C family. Mg(2+) is required as a cofactor. Mn(2+) serves as cofactor.

Its subcellular location is the mitochondrion. The enzyme catalyses O-phospho-L-seryl-[protein] + H2O = L-seryl-[protein] + phosphate. It carries out the reaction O-phospho-L-threonyl-[protein] + H2O = L-threonyl-[protein] + phosphate. In terms of biological role, involved in regulation of pyruvate dehydrogenase activity. This Schizosaccharomyces pombe (strain 972 / ATCC 24843) (Fission yeast) protein is Protein phosphatase 2C homolog C10F6.17c.